Reading from the N-terminus, the 284-residue chain is Bifunctional protein FolD (284 aa).

Residues 165–167, isoleucine 190, and isoleucine 231 contribute to the NADP(+) site; that span reads GAS.

The protein belongs to the tetrahydrofolate dehydrogenase/cyclohydrolase family. Homodimer.

The catalysed reaction is (6R)-5,10-methylene-5,6,7,8-tetrahydrofolate + NADP(+) = (6R)-5,10-methenyltetrahydrofolate + NADPH. It catalyses the reaction (6R)-5,10-methenyltetrahydrofolate + H2O = (6R)-10-formyltetrahydrofolate + H(+). Its pathway is one-carbon metabolism; tetrahydrofolate interconversion. Its function is as follows. Catalyzes the oxidation of 5,10-methylenetetrahydrofolate to 5,10-methenyltetrahydrofolate and then the hydrolysis of 5,10-methenyltetrahydrofolate to 10-formyltetrahydrofolate. The protein is Bifunctional protein FolD of Alkaliphilus metalliredigens (strain QYMF).